Here is a 249-residue protein sequence, read N- to C-terminus: Homeobox protein TGIF2LX (249 aa).

Disordered regions lie at residues 1–62 (MEAA…KRKG) and 126–192 (DPIV…KLTV). Residues 9–27 (AETRSRVEKDSRRAKKDSP) show a composition bias toward basic and acidic residues. Residues 28 to 46 (AKTQSPAQDTSIMLRNNAD) are compositionally biased toward polar residues. Residues 55–118 (EHKKKRKGYL…INARRRILPD (64 aa)) constitute a DNA-binding region (homeobox; TALE-type). The segment covering 159–172 (DNVQSLPLRSSPKG) has biased composition (polar residues).

The protein belongs to the TALE/TGIF homeobox family.

The protein resides in the nucleus. May have a transcription role in testis. The polypeptide is Homeobox protein TGIF2LX (TGIF2LX) (Macaca fascicularis (Crab-eating macaque)).